Reading from the N-terminus, the 126-residue chain is UPF0102 protein Cphamn1_0017 (126 aa).

Belongs to the UPF0102 family.

This is UPF0102 protein Cphamn1_0017 from Chlorobium phaeobacteroides (strain BS1).